Here is a 489-residue protein sequence, read N- to C-terminus: Glucose-6-phosphate 1-dehydrogenase (489 aa).

Positions 50 and 151 each coordinate NADP(+). Substrate is bound by residues His181, Lys185, Glu219, and Asp238. His243 (proton acceptor) is an active-site residue. 2 residues coordinate substrate: Lys341 and Lys346.

This sequence belongs to the glucose-6-phosphate dehydrogenase family. As to quaternary structure, homodimer.

The catalysed reaction is D-glucose 6-phosphate + NADP(+) = 6-phospho-D-glucono-1,5-lactone + NADPH + H(+). It participates in carbohydrate degradation; pentose phosphate pathway; D-ribulose 5-phosphate from D-glucose 6-phosphate (oxidative stage): step 1/3. Functionally, catalyzes the oxidation of glucose 6-phosphate to 6-phosphogluconolactone. This chain is Glucose-6-phosphate 1-dehydrogenase, found in Gluconobacter oxydans (strain 621H) (Gluconobacter suboxydans).